The chain runs to 910 residues: Bifunctional glucose-6-phosphate 1-dehydrogenase/6-phosphogluconolactonase (910 aa).

The interval methionine 1–asparagine 170 is 6-phosphogluconolactonase. The segment at isoleucine 171–cysteine 276 is linker. A glucose-6-phosphate 1-dehydrogenase region spans residues threonine 277 to asparagine 910. Residues glycine 345 to lysine 352, arginine 379, and lysine 548 contribute to the NADP(+) site. D-glucose 6-phosphate is bound by residues lysine 548, histidine 578–lysine 582, glutamate 616, and aspartate 635. The active-site Proton acceptor is histidine 640. The interval glutamate 689–proline 711 is disordered. Lysine 742 serves as a coordination point for NADP(+). Position 745 (lysine 745) interacts with D-glucose 6-phosphate. An NADP(+)-binding site is contributed by arginine 755. Glutamine 779 contacts D-glucose 6-phosphate. Tyrosine 785–lysine 787 is a binding site for NADP(+).

It in the N-terminal section; belongs to the glucosamine/galactosamine-6-phosphate isomerase family. 6-phosphogluconolactonase subfamily. The protein in the C-terminal section; belongs to the glucose-6-phosphate dehydrogenase family. As to quaternary structure, homotetramer.

The enzyme catalyses 6-phospho-D-glucono-1,5-lactone + H2O = 6-phospho-D-gluconate + H(+). It catalyses the reaction D-glucose 6-phosphate + NADP(+) = 6-phospho-D-glucono-1,5-lactone + NADPH + H(+). Its pathway is carbohydrate degradation; pentose phosphate pathway; D-ribulose 5-phosphate from D-glucose 6-phosphate (oxidative stage): step 1/3. The protein operates within carbohydrate degradation; pentose phosphate pathway; D-ribulose 5-phosphate from D-glucose 6-phosphate (oxidative stage): step 2/3. With respect to regulation, G6PD activity is inhibited by glucosamine-6-phosphate, NADPH, and 4-(4-bromophenyl)-7-(3,4-dimethoxyphenyl)-4,6,7,8-tetrahydroquinoline-2,5(1 H,3H)-dione. G6PD and 6PGL activities can be reversibly inhibited by S-glutathionylation (in vitro). Its function is as follows. Bifunctional enzyme which catalyzes the first two steps of the oxidative pentose-phosphate pathway, which represents a route for the dissimilation of carbohydrates besides glycolysis. The main function of this enzyme is to provide reducing power (NADPH) and pentose phosphates for fatty acid and nucleic acid synthesis. In Plasmodium falciparum (isolate 3D7), this protein is Bifunctional glucose-6-phosphate 1-dehydrogenase/6-phosphogluconolactonase.